Reading from the N-terminus, the 305-residue chain is Glutaminase 2 (305 aa).

Residues Ser61, Asn113, Glu158, Asn165, Tyr189, Tyr241, and Val259 each contribute to the substrate site.

The protein belongs to the glutaminase family. Homotetramer.

The enzyme catalyses L-glutamine + H2O = L-glutamate + NH4(+). The sequence is that of Glutaminase 2 from Clostridium perfringens (strain 13 / Type A).